Consider the following 952-residue polypeptide: Anion exchange protein 4 (952 aa).

The tract at residues 1–41 is disordered; that stretch reads MKLPGQGDFESSDAHENAHSEEPDSGLGPGPGLNGPSGIDI. Over residues 12–22 the composition is skewed to basic and acidic residues; the sequence is SDAHENAHSEE. Helical transmembrane passes span 385-405, 413-433, 470-490, and 501-521; these read AVFY…GLLG, GVLE…LMAG, VGIW…SLLV, and FCAL…LNLI. Residues Asn-546 and Asn-569 are each glycosylated (N-linked (GlcNAc...) asparagine). Transmembrane regions (helical) follow at residues 593-613, 634-654, 681-701, 727-747, 784-804, 807-827, and 870-890; these read VPDI…CAIA, FSSV…GLAT, PWWL…LIFM, LFCV…WYVS, GLVV…LKFI, PVLY…IQFV, and VVKS…LVAI. The segment at 915–938 is disordered; that stretch reads ETIPENRSEPEHLFSGNDSEDSEL. 3 N-linked (GlcNAc...) asparagine glycosylation sites follow: Asn-920, Asn-931, and Asn-948.

Belongs to the anion exchanger (TC 2.A.31) family. Expressed in submandibular gland (SMG) duct and cortical collecting duct (CCD) of kidney. Lower expressed in duodenal villi.

The protein resides in the basolateral cell membrane. It catalyses the reaction 2 hydrogencarbonate(out) + chloride(in) + Na(+)(out) = 2 hydrogencarbonate(in) + chloride(out) + Na(+)(in). It carries out the reaction K(+)(in) + 2 hydrogencarbonate(in) + chloride(out) = K(+)(out) + 2 hydrogencarbonate(out) + chloride(in). The enzyme catalyses Li(+)(in) + 2 hydrogencarbonate(in) + chloride(out) = Li(+)(out) + 2 hydrogencarbonate(out) + chloride(in). The catalysed reaction is Rb(+)(in) + 2 hydrogencarbonate(in) + chloride(out) = Rb(+)(out) + 2 hydrogencarbonate(out) + chloride(in). It catalyses the reaction Cs(+)(in) + 2 hydrogencarbonate(in) + chloride(out) = Cs(+)(out) + 2 hydrogencarbonate(out) + chloride(in). Its activity is regulated as follows. Cl(-)/HCO3(-) exchanger activity is substantially increased in response to 5 uM isoproterenol. Cl(-)/HCO3(-) exchanger activity is increased by both forskolin and coexpression with the catalytic subunit alpha of PKA. Electroneutral Cl(-)/HCO3(-) antiporter that favors chloride ion entry and efflux of hydrogencarbonate and sodium ion across the basolateral membrane and may participate in salivary secretion. Also mediates Cl(-)/HCO3(-) exchange activity in the presence of K(+) as well as Cs(+), Li(+), and Rb(+). Does not contribute to Cl(-)/HCO3(-) exchanger in the apical membrane of the upper villous epithelium. In Mus musculus (Mouse), this protein is Anion exchange protein 4.